Reading from the N-terminus, the 365-residue chain is MAKDYYKILGVDRNATDEEIKKAFRELAKKWHPDLHPENKQEAEEKFKEISEAYEVLSDPQKRRMYDQTGTVDFGAGGQNFNWDNFTHYSDLNDIFNDIFGGNFASDFFSGFGRGQREEQYDLDLYTNLDITLEDAYYGTEKRIKYRRNAMCPDCNGTGAKNGKLITCPTCNGTGQQRIVRGQGFFRMVTVTTCQTCGGRGRIPEEKCPRCNGTGTVVVNEDISVKIPKGATDNLRLRVQGKGQSYNGRTGDLYVVLRVRNDRNVQRINDDLMIDQKINFAQAALGDTIEVNLFREKYSLKIPEGTQPGEVLRIKGAGMPHLNGHGSGDLLVRVNVEVPKRLTQKQKDLIREIFDIKENHRSWFH.

A J domain is found at 4–70; that stretch reads DYYKILGVDR…QKRRMYDQTG (67 aa). The CR-type zinc finger occupies 139-220; sequence GTEKRIKYRR…CNGTGTVVVN (82 aa). Zn(2+) contacts are provided by C152, C155, C168, C171, C194, C197, C208, and C211. CXXCXGXG motif repeat units lie at residues 152-159, 168-175, 194-201, and 208-215; these read CPDCNGTG, CPTCNGTG, CQTCGGRG, and CPRCNGTG.

Belongs to the DnaJ family. Homodimer. The cofactor is Zn(2+).

It is found in the cytoplasm. Participates actively in the response to hyperosmotic and heat shock by preventing the aggregation of stress-denatured proteins and by disaggregating proteins, also in an autonomous, DnaK-independent fashion. Unfolded proteins bind initially to DnaJ; upon interaction with the DnaJ-bound protein, DnaK hydrolyzes its bound ATP, resulting in the formation of a stable complex. GrpE releases ADP from DnaK; ATP binding to DnaK triggers the release of the substrate protein, thus completing the reaction cycle. Several rounds of ATP-dependent interactions between DnaJ, DnaK and GrpE are required for fully efficient folding. Also involved, together with DnaK and GrpE, in the DNA replication of plasmids through activation of initiation proteins. In Thermoplasma acidophilum (strain ATCC 25905 / DSM 1728 / JCM 9062 / NBRC 15155 / AMRC-C165), this protein is Chaperone protein DnaJ.